Consider the following 388-residue polypeptide: Succinate--CoA ligase [ADP-forming] subunit beta (388 aa).

Positions 9 to 244 (KQLFAEYGLP…PSQEDEREAH (236 aa)) constitute an ATP-grasp domain. Residues Lys46, 53–55 (GRG), Glu99, Thr102, and Glu107 contribute to the ATP site. Mg(2+) is bound by residues Asn199 and Asp213. Residues Asn264 and 321–323 (GIV) each bind substrate.

Belongs to the succinate/malate CoA ligase beta subunit family. As to quaternary structure, heterotetramer of two alpha and two beta subunits. Requires Mg(2+) as cofactor.

The catalysed reaction is succinate + ATP + CoA = succinyl-CoA + ADP + phosphate. The enzyme catalyses GTP + succinate + CoA = succinyl-CoA + GDP + phosphate. It participates in carbohydrate metabolism; tricarboxylic acid cycle; succinate from succinyl-CoA (ligase route): step 1/1. Succinyl-CoA synthetase functions in the citric acid cycle (TCA), coupling the hydrolysis of succinyl-CoA to the synthesis of either ATP or GTP and thus represents the only step of substrate-level phosphorylation in the TCA. The beta subunit provides nucleotide specificity of the enzyme and binds the substrate succinate, while the binding sites for coenzyme A and phosphate are found in the alpha subunit. This is Succinate--CoA ligase [ADP-forming] subunit beta from Marinomonas sp. (strain MWYL1).